The chain runs to 321 residues: NADH-ubiquinone oxidoreductase chain 1 (321 aa).

A run of 8 helical transmembrane segments spans residues 6–26, 67–87, 103–123, 143–163, 174–194, 220–240, 256–276, and 296–316; these read IVPP…LTAL, LLAT…LALA, LGLL…LWSG, ISYE…SGGF, PLYL…STLA, ASPF…MNTL, ALFT…FLWV, and FLPM…SMFG.

Belongs to the complex I subunit 1 family.

It localises to the mitochondrion inner membrane. It catalyses the reaction a ubiquinone + NADH + 5 H(+)(in) = a ubiquinol + NAD(+) + 4 H(+)(out). In terms of biological role, core subunit of the mitochondrial membrane respiratory chain NADH dehydrogenase (Complex I) that is believed to belong to the minimal assembly required for catalysis. Complex I functions in the transfer of electrons from NADH to the respiratory chain. The immediate electron acceptor for the enzyme is believed to be ubiquinone. In Alligator mississippiensis (American alligator), this protein is NADH-ubiquinone oxidoreductase chain 1 (MT-ND1).